The chain runs to 118 residues: Putative pterin-4-alpha-carbinolamine dehydratase (118 aa).

This sequence belongs to the pterin-4-alpha-carbinolamine dehydratase family.

The enzyme catalyses (4aS,6R)-4a-hydroxy-L-erythro-5,6,7,8-tetrahydrobiopterin = (6R)-L-erythro-6,7-dihydrobiopterin + H2O. The chain is Putative pterin-4-alpha-carbinolamine dehydratase from Pseudomonas fluorescens (strain ATCC BAA-477 / NRRL B-23932 / Pf-5).